Here is a 647-residue protein sequence, read N- to C-terminus: uncharacterized protein (647 aa).

5 consecutive transmembrane segments (helical) span residues 14 to 38, 61 to 78, 90 to 110, 140 to 158, and 178 to 195; these read LFPI…LAVW, VVAL…TTLF, LWLT…PAFI, LSAV…VIYW, and VIAL…RSSF.

The protein localises to the cell membrane. This is an uncharacterized protein from Haemophilus influenzae (strain ATCC 51907 / DSM 11121 / KW20 / Rd).